The sequence spans 235 residues: Large ribosomal subunit protein uL1 (235 aa).

Belongs to the universal ribosomal protein uL1 family. Part of the 50S ribosomal subunit.

In terms of biological role, binds directly to 23S rRNA. The L1 stalk is quite mobile in the ribosome, and is involved in E site tRNA release. Protein L1 is also a translational repressor protein, it controls the translation of the L11 operon by binding to its mRNA. The sequence is that of Large ribosomal subunit protein uL1 from Fusobacterium nucleatum subsp. nucleatum (strain ATCC 25586 / DSM 15643 / BCRC 10681 / CIP 101130 / JCM 8532 / KCTC 2640 / LMG 13131 / VPI 4355).